The chain runs to 250 residues: MAVTKLVLVRHGESQWNKENRFTGWYDVDLSEKGVSEAKAAGKLLKEEGFSFDFAYTSVLKRAIHTLWNVLDELDQAWLPVEKSWKLNERHYGALQGLNKAETAEKYGDEQVKQWRRGFAVTPPELTKDDERYPGHDPRYAKLSEKELPLTESLALTIDRVIPYWTDTILPRMKSGERVIIAAHGNSLRALVKYLDNMSEDEILELNIPTGVPLVYEFDENFKPLKHYYLGNADEIAAKAAAVANQGKAK.

Substrate contacts are provided by residues 10 to 17 (RHGESQWN), 23 to 24 (TG), R62, 89 to 92 (ERHY), K100, 116 to 117 (RR), and 185 to 186 (GN). H11 acts as the Tele-phosphohistidine intermediate in catalysis. Catalysis depends on E89, which acts as the Proton donor/acceptor.

This sequence belongs to the phosphoglycerate mutase family. BPG-dependent PGAM subfamily. Homodimer.

It carries out the reaction (2R)-2-phosphoglycerate = (2R)-3-phosphoglycerate. It functions in the pathway carbohydrate degradation; glycolysis; pyruvate from D-glyceraldehyde 3-phosphate: step 3/5. In terms of biological role, catalyzes the interconversion of 2-phosphoglycerate and 3-phosphoglycerate. This is 2,3-bisphosphoglycerate-dependent phosphoglycerate mutase from Salmonella paratyphi A (strain ATCC 9150 / SARB42).